The primary structure comprises 609 residues: Polyadenylate-binding protein 7 (609 aa).

RRM domains lie at 24–102 (ASLY…WSVR), 112–189 (GNVF…KFMK), 201–278 (TNLY…RAQK), and 304–381 (SNIY…IAQK). A PABC domain is found at 509-586 (EMKKSIQQRQ…AFEVLKSSKT (78 aa)).

The protein belongs to the polyadenylate-binding protein type-1 family. Expressed predominantly in siliques.

It is found in the cytoplasm. Its subcellular location is the nucleus. Its function is as follows. Binds the poly(A) tail of mRNA. Appears to be an important mediator of the multiple roles of the poly(A) tail in mRNA biogenesis, stability and translation. The protein is Polyadenylate-binding protein 7 (PAB7) of Arabidopsis thaliana (Mouse-ear cress).